Reading from the N-terminus, the 155-residue chain is Ribosome maturation factor RimP (155 aa).

The protein belongs to the RimP family.

It is found in the cytoplasm. Its function is as follows. Required for maturation of 30S ribosomal subunits. The chain is Ribosome maturation factor RimP from Deinococcus geothermalis (strain DSM 11300 / CIP 105573 / AG-3a).